Consider the following 348-residue polypeptide: Heat-inducible transcription repressor HrcA (348 aa).

It belongs to the HrcA family.

In terms of biological role, negative regulator of class I heat shock genes (grpE-dnaK-dnaJ and groELS operons). Prevents heat-shock induction of these operons. The sequence is that of Heat-inducible transcription repressor HrcA from Lacticaseibacillus casei (strain BL23) (Lactobacillus casei).